Consider the following 370-residue polypeptide: Pulmonary surfactant-associated protein B (370 aa).

Positions 1–24 are cleaved as a signal peptide; that stretch reads MAKSHLPPWLLLLLLPTLCGPGTA. Positions 25–184 are excised as a propeptide; the sequence is VWATSPLACA…PHTQDLSAQR (160 aa). The Saposin A-type domain maps to 26–66; it reads WATSPLACAQGPEFWCQSLEQALQCKALGHCLQEVWGHVGA. Saposin B-type domains are found at residues 66-148, 188-265, and 284-359; these read ADDL…QPGS, PLPL…SSVD, and QDPE…VATL. 9 disulfide bridges follow: Cys70-Cys144, Cys73-Cys138, Cys101-Cys113, Cys192-Cys261, Cys195-Cys255, Cys219-Cys230, Cys288-Cys355, Cys291-Cys349, and Cys314-Cys324. Positions 264–370 are excised as a propeptide; it reads VDSIGQVPPT…PLQCIQSPHF (107 aa). Asn300 is a glycosylation site (N-linked (GlcNAc...) asparagine).

Homodimer; disulfide-linked.

The protein resides in the secreted. The protein localises to the extracellular space. It is found in the surface film. Pulmonary surfactant-associated proteins promote alveolar stability by lowering the surface tension at the air-liquid interface in the peripheral air spaces. SP-B increases the collapse pressure of palmitic acid to nearly 70 millinewtons per meter. In Oryctolagus cuniculus (Rabbit), this protein is Pulmonary surfactant-associated protein B (SFTPB).